Consider the following 227-residue polypeptide: uncharacterized protein (227 aa).

The next 5 helical transmembrane spans lie at 27–47 (AVLPGILIIVFIETGLLFPLL), 63–83 (PAPPVTIGVLAPCVALVAVLG), 126–146 (TIILARFVPIARTFVPVIAGV), 153–173 (VFLGFDIVGGVAWGAGVTLAG), and 186–206 (FQLIILAIVFVSLLPALVSAA).

The protein belongs to the DedA family.

The protein resides in the cell membrane. This is an uncharacterized protein from Mycobacterium tuberculosis (strain CDC 1551 / Oshkosh).